We begin with the raw amino-acid sequence, 909 residues long: Yellow mounds protein A (909 aa).

The MIF4G domain occupies 7–283 (LNVVSRILNK…KNLFELKNNK (277 aa)). Disordered regions lie at residues 178–232 (SMGG…NNNI), 415–439 (MESS…SGIK), 460–537 (INLP…SSAP), 627–689 (VPPV…SEAR), and 704–774 (SLSG…AKKH). Residues 204–215 (DDDDHDEEDNEN) are compositionally biased toward acidic residues. Low complexity-rich tracts occupy residues 216–231 (NYEN…NNNN) and 417–436 (SSSN…SSSS). The segment covering 473–490 (RSNSPSLSSVVKQPQSQQ) has biased composition (polar residues). The segment covering 491 to 525 (NNNNNNNNNNNNTTITTTTSSNNNINNNNNNNNNN) has biased composition (low complexity). The span at 721 to 738 (STPTLKSTPAIVQNGGSI) shows a compositional bias: polar residues. A compositionally biased stretch (low complexity) spans 739 to 756 (TSTSSSSSSSSSSSSSTT). Positions 845 to 877 (TMLFDLEEMAQEQQNLEKQNDQQQNLLTQNNQI) form a coiled coil.

Its function is as follows. Plays as essential role in regulating terminal differentiation. In Dictyostelium discoideum (Social amoeba), this protein is Yellow mounds protein A (yelA).